The chain runs to 137 residues: Large-conductance mechanosensitive channel (137 aa).

2 helical membrane-spanning segments follow: residues 10 to 30 (FAMR…AAFG) and 76 to 96 (GVFI…FMAI).

This sequence belongs to the MscL family. As to quaternary structure, homopentamer.

The protein localises to the cell inner membrane. Channel that opens in response to stretch forces in the membrane lipid bilayer. May participate in the regulation of osmotic pressure changes within the cell. In Klebsiella pneumoniae subsp. pneumoniae (strain ATCC 700721 / MGH 78578), this protein is Large-conductance mechanosensitive channel.